The chain runs to 452 residues: Elongation factor Tu, mitochondrial (452 aa).

The N-terminal 43 residues, 1–43 (MAAATLLRATPRFSGLCASPTPFLQGRLRPLKAPASPFLCRGL), are a transit peptide targeting the mitochondrion. The region spanning 55-251 (KPHVNVGTIG…AVDTYIPVPT (197 aa)) is the tr-type G domain. The G1 stretch occupies residues 64 to 71 (GHVDHGKT). GTP contacts are provided by aspartate 67, glycine 69, lysine 70, threonine 71, and threonine 72. Residue threonine 71 coordinates Mg(2+). An N6-acetyllysine modification is found at lysine 79. N6-acetyllysine; alternate is present on lysine 88. Lysine 88 is modified (N6-succinyllysine; alternate). The G2 stretch occupies residues 105-109 (GITIN). The tract at residues 126–129 (DCPG) is G3. Residues asparagine 181, aspartate 184, serine 219, alanine 220, and leucine 221 each coordinate GTP. The segment at 181-184 (NKAD) is G4. The interval 219-221 (SAL) is G5. N6-succinyllysine is present on lysine 234. Lysine 256 bears the N6-acetyllysine mark. Residue threonine 278 is modified to Phosphothreonine. Lysine 286 bears the N6-succinyllysine mark. Serine 312 carries the phosphoserine modification. N6-acetyllysine occurs at positions 361 and 418.

Belongs to the TRAFAC class translation factor GTPase superfamily. Classic translation factor GTPase family. EF-Tu/EF-1A subfamily. Interacts with NLRX1. Interacts with ATG16L1.

It is found in the mitochondrion. The enzyme catalyses GTP + H2O = GDP + phosphate + H(+). Functionally, GTP hydrolase that promotes the GTP-dependent binding of aminoacyl-tRNA to the A-site of ribosomes during protein biosynthesis. Plays a role in the regulation of autophagy and innate immunity. Recruits ATG5-ATG12 and NLRX1 at mitochondria and serves as a checkpoint of the RIGI-MAVS pathway. In turn, inhibits RLR-mediated type I interferon while promoting autophagy. This Rattus norvegicus (Rat) protein is Elongation factor Tu, mitochondrial.